A 736-amino-acid chain; its full sequence is Protein DSF2 (736 aa).

Residues 1-10 (MNQNLKNTSW) are compositionally biased toward polar residues. 4 disordered regions span residues 1–46 (MNQN…DSQF), 178–208 (SGMKPQMNRNEKDYKYPNLENGNRSTNSPNP), 229–410 (ISDN…SGEN), and 440–461 (FKTASTPQSSTDKKKNSKARPN). Positions 14-24 (IGSDDQERKAN) are enriched in basic and acidic residues. Composition is skewed to polar residues over residues 25-46 (SSEVSQSPPPNNSFESSMDSQF) and 197-208 (ENGNRSTNSPNP). Residues 238 to 256 (NNANSKNNRTTSNNINTST) are compositionally biased toward low complexity. Polar residues predominate over residues 264 to 284 (KQSCPNEFTTTQKSNCLYRNG). 3 stretches are compositionally biased toward low complexity: residues 285–294 (SSTSTNTSFS), 303–318 (KTQSSFESESSSFSKL), and 335–350 (SNSSTSTITKTNTMTN). Basic residues predominate over residues 374-385 (KLFKSPRTRAKN). The segment covering 392–410 (EGSSPIRSATNSLDFSGEN) has biased composition (polar residues).

This Saccharomyces cerevisiae (strain ATCC 204508 / S288c) (Baker's yeast) protein is Protein DSF2 (DSF2).